A 585-amino-acid polypeptide reads, in one-letter code: A-type ATP synthase subunit A (585 aa).

Gly-232–Thr-239 provides a ligand contact to ATP.

It belongs to the ATPase alpha/beta chains family. Has multiple subunits with at least A(3), B(3), C, D, E, F, H, I and proteolipid K(x).

It localises to the cell membrane. The enzyme catalyses ATP + H2O + 4 H(+)(in) = ADP + phosphate + 5 H(+)(out). Component of the A-type ATP synthase that produces ATP from ADP in the presence of a proton gradient across the membrane. The A chain is the catalytic subunit. The protein is A-type ATP synthase subunit A of Methanosphaera stadtmanae (strain ATCC 43021 / DSM 3091 / JCM 11832 / MCB-3).